The following is a 152-amino-acid chain: Ribosome maturation factor RimP (152 aa).

This sequence belongs to the RimP family.

Its subcellular location is the cytoplasm. Required for maturation of 30S ribosomal subunits. The protein is Ribosome maturation factor RimP of Proteus mirabilis (strain HI4320).